A 605-amino-acid polypeptide reads, in one-letter code: Dolichyl-diphosphooligosaccharide--protein glycosyltransferase subunit 1 (605 aa).

The N-terminal stretch at 1 to 22 (MEAPIVLLLLLWLALAPTPGSA) is a signal peptide. The Lumenal portion of the chain corresponds to 23–437 (SSEAPPLVNE…FNKVLMLQEP (415 aa)). Lys185 bears the N6-acetyllysine mark. A glycan (N-linked (GlcNAc...) asparagine) is linked at Asn297. Residues 438 to 455 (LLVVAAFYILFFTVIIYV) form a helical membrane-spanning segment. Residues 456 to 605 (RLDFSITKDP…TKIDHILDAL (150 aa)) are Cytoplasmic-facing. Lys536 bears the N6-acetyllysine; alternate mark. A Glycyl lysine isopeptide (Lys-Gly) (interchain with G-Cter in SUMO2); alternate cross-link involves residue Lys536.

It belongs to the OST1 family. Component of the oligosaccharyltransferase (OST) complex. OST exists in two different complex forms which contain common core subunits RPN1, RPN2, OST48, OST4, DAD1 and TMEM258, either STT3A or STT3B as catalytic subunits, and form-specific accessory subunits. STT3A complex assembly occurs through the formation of 3 subcomplexes. Subcomplex 1 contains RPN1 and TMEM258, subcomplex 2 contains the STT3A-specific subunits STT3A, DC2/OSTC, and KCP2 as well as the core subunit OST4, and subcomplex 3 contains RPN2, DAD1, and OST48. The STT3A complex can form stable complexes with the Sec61 complex or with both the Sec61 and TRAP complexes. Interacts with TMEM35A/NACHO. In terms of processing, ubiquitinated by the ECS(ASB11) complex. Ufmylated by UFL1 in response to endoplasmic reticulum stress, promoting reticulophagy of endoplasmic reticulum sheets. Expressed in all tissues tested.

Its subcellular location is the endoplasmic reticulum membrane. It functions in the pathway protein modification; protein glycosylation. Its function is as follows. Subunit of the oligosaccharyl transferase (OST) complex that catalyzes the initial transfer of a defined glycan (Glc(3)Man(9)GlcNAc(2) in eukaryotes) from the lipid carrier dolichol-pyrophosphate to an asparagine residue within an Asn-X-Ser/Thr consensus motif in nascent polypeptide chains, the first step in protein N-glycosylation. N-glycosylation occurs cotranslationally and the complex associates with the Sec61 complex at the channel-forming translocon complex that mediates protein translocation across the endoplasmic reticulum (ER). All subunits are required for a maximal enzyme activity. The protein is Dolichyl-diphosphooligosaccharide--protein glycosyltransferase subunit 1 of Rattus norvegicus (Rat).